A 48-amino-acid chain; its full sequence is Large ribosomal subunit protein eL40 (48 aa).

The protein belongs to the eukaryotic ribosomal protein eL40 family.

The protein is Large ribosomal subunit protein eL40 of Methanoregula boonei (strain DSM 21154 / JCM 14090 / 6A8).